Here is a 441-residue protein sequence, read N- to C-terminus: Endothelin receptor type B (441 aa).

Residues 1–26 (MQPPPSLCGLALLALVLACGMAEVWG) form the signal peptide. The Extracellular segment spans residues 27 to 100 (EEREMPSAPA…RPTEIKDTFK (74 aa)). A disordered region spans residues 30 to 90 (EMPSAPATPP…APRRTPPPCQ (61 aa)). A compositionally biased stretch (polar residues) spans 47–65 (LTPSTKTSWPRDSNASLPR). N-linked (GlcNAc...) asparagine glycosylation occurs at Asn-60. A helical membrane pass occupies residues 101–125 (YINTVVSCLVFVLGIIGNSTLLRII). At 126-136 (YKNKCMRNGPN) the chain is on the cytoplasmic side. Residues 137–162 (ILIASLALGDLLHIIIDIPINVYKLL) form a helical membrane-spanning segment. At 163-174 (AEDWPFGAEMCK) the chain is on the extracellular side. A disulfide bridge links Cys-173 with Cys-254. A helical membrane pass occupies residues 175–196 (LVPFIQKASVGITVLSLCALSI). The Cytoplasmic segment spans residues 197 to 217 (DRYRAVASWSRIKGIGVPKWT). A helical transmembrane segment spans residues 218 to 242 (AVEIVLIWVVSVILAVPEAIGFNLV). Residues 243–270 (TIDYKGSYLRICLLNPTQKTAFMQFYKT) are Extracellular-facing. A helical membrane pass occupies residues 271-295 (AKDWWLFSFYFCLPLAITAFFYTLM). Topologically, residues 296–323 (TCEMLRKKSGMQIALNDHLKQRREVAKT) are cytoplasmic. Phosphoserine is present on Ser-304. A helical membrane pass occupies residues 324–349 (VFCLVLVFGLCWLALHLSRILKLTLY). Topologically, residues 350 to 361 (DQNDPNRCELLS) are extracellular. A helical transmembrane segment spans residues 362–388 (FLLVLDYIGINMASLNSCINPIALYLV). The Cytoplasmic portion of the chain corresponds to 389-441 (SKRFKNCFKSCLCCWCQSFEEKQSLEEKQSCLKFKANDHGYDNFRSSNKYSSS). 2 S-palmitoyl cysteine lipidation sites follow: Cys-402 and Cys-404. Ser-418 carries the phosphoserine modification. Tyr-438 carries the post-translational modification Phosphotyrosine. Phosphoserine occurs at positions 439, 440, and 441.

Belongs to the G-protein coupled receptor 1 family. Endothelin receptor subfamily. EDNRB sub-subfamily.

The protein localises to the cell membrane. Non-specific receptor for endothelin 1, 2, and 3. Mediates its action by association with G proteins that activate a phosphatidylinositol-calcium second messenger system. The chain is Endothelin receptor type B (EDNRB) from Oryctolagus cuniculus (Rabbit).